A 195-amino-acid polypeptide reads, in one-letter code: Imidazoleglycerol-phosphate dehydratase (195 aa).

It belongs to the imidazoleglycerol-phosphate dehydratase family.

The protein resides in the cytoplasm. The enzyme catalyses D-erythro-1-(imidazol-4-yl)glycerol 3-phosphate = 3-(imidazol-4-yl)-2-oxopropyl phosphate + H2O. It participates in amino-acid biosynthesis; L-histidine biosynthesis; L-histidine from 5-phospho-alpha-D-ribose 1-diphosphate: step 6/9. This Burkholderia lata (strain ATCC 17760 / DSM 23089 / LMG 22485 / NCIMB 9086 / R18194 / 383) protein is Imidazoleglycerol-phosphate dehydratase.